We begin with the raw amino-acid sequence, 429 residues long: Endo-beta-1,4-galactanase (429 aa).

An N-terminal signal peptide occupies residues 1–21 (MKSKVKMFFAAAIVWSACSST). 146-149 (DPAK) serves as a coordination point for substrate. The Proton donor role is filled by E194. Residues 233–234 (TN) and H267 contribute to the substrate site. E292 serves as the catalytic Nucleophile. T296 is a substrate binding site. Residues D301, D303, H305, and N307 each contribute to the Ca(2+) site. Residues K311 and D388 each coordinate substrate. S396 and D399 together coordinate Ca(2+).

This sequence belongs to the glycosyl hydrolase 53 family. It depends on Ca(2+) as a cofactor.

The protein resides in the secreted. The catalysed reaction is The enzyme specifically hydrolyzes (1-&gt;4)-beta-D-galactosidic linkages in type I arabinogalactans.. Its function is as follows. Involved in galactan degradation. Degrades arabinose-free galactan to galactooligosaccharides, producing galactotetraose as the main product along with galactotriose, galactobiose, and galactose. Is also able to degrade galactotetraose, galactotriose and galactobiose, suggesting an additional exo-mode of activity. May hydrolyze the beta-1,4-galactan linkages of the galactan portion of arabinogalactan type I, a pectic plant polysaccharide from which most of the arabinose has been removed. The sequence is that of Endo-beta-1,4-galactanase from Bacillus subtilis (strain 168).